The sequence spans 361 residues: Inhibin alpha chain (361 aa).

The signal sequence occupies residues 1-21; the sequence is MLPLLLPLQLLLLMVMKGGHG. The propeptide occupies 22–64; that stretch reads CQGPELDRELVLAKVRALVLDALGPPNASKDGGKPVAQRLTRR. The segment at 45–82 is disordered; that stretch reads GPPNASKDGGKPVAQRLTRRHAHTGGSTRRSMENEDED. 3 N-linked (GlcNAc...) asparagine glycosylation sites follow: Asn48, Asn144, and Asn266. The propeptide at 65 to 230 is inhibin alpha N-terminal region; that stretch reads HAHTGGSTRR…PPSVGERARR (166 aa). 3 disulfide bridges follow: Cys260–Cys323, Cys289–Cys358, and Cys293–Cys360.

It belongs to the TGF-beta family. Dimeric, linked by one or more disulfide bonds. Activin B is a dimer of alpha and beta-B. Inhibin A is a dimer of alpha and beta-A. Inhibin B is a dimer of alpha and beta-B. Interacts with TGFBR3L; this interaction regulates female fertility. In terms of processing, proteolytic processing yields a number of bioactive forms, consisting either solely of the mature alpha chain, of the most N-terminal propeptide linked through a disulfide bond to the mature alpha chain, or of the entire proprotein.

Its subcellular location is the secreted. Its function is as follows. Inhibins and activins inhibit and activate, respectively, the secretion of follitropin by the pituitary gland. Inhibins/activins are involved in regulating a number of diverse functions such as hypothalamic and pituitary hormone secretion, gonadal hormone secretion, germ cell development and maturation, erythroid differentiation, insulin secretion, nerve cell survival, embryonic axial development or bone growth, depending on their subunit composition. Inhibins appear to oppose the functions of activins. Functionally, inhibin A is a dimer of alpha/INHA and beta-A/INHBA that functions as a feedback regulator in the hypothalamic-pituitary-gonadal (HPG) axis. Inhibits the secretion of FSH from the anterior pituitary gland by acting on pituitary gonadotrope cells. Antagonizes activin A by binding to the proteoglycan, betaglycan, and forming a stable complex with and, thereby, sequestering type II activin receptors while excluding type I receptor. Inhibin B is a dimer of alpha and beta-B that plays a crucial role in the regulation of the reproductive system by inhibiting the secretion of follicle-stimulating hormone (FSH) from the anterior pituitary gland. Thereby, maintains reproductive homeostasis in both males and females. Acts as a more potent suppressor of FSH release than inhibin A. Functions as competitive receptor antagonist binding activin type II receptors with high affinity in the presence of the TGF-beta type III coreceptor/TGFBR3L. This Trichosurus vulpecula (Brush-tailed possum) protein is Inhibin alpha chain (INHA).